The primary structure comprises 475 residues: Ribulose bisphosphate carboxylase large chain (475 aa).

Positions 1–2 (MS) are excised as a propeptide. Proline 3 is modified (N-acetylproline). Position 14 is an N6,N6,N6-trimethyllysine (lysine 14). Residues asparagine 123 and threonine 173 each contribute to the substrate site. Lysine 175 serves as the catalytic Proton acceptor. Lysine 177 provides a ligand contact to substrate. Mg(2+) contacts are provided by lysine 201, aspartate 203, and glutamate 204. N6-carboxylysine is present on lysine 201. The active-site Proton acceptor is the histidine 294. Substrate-binding residues include arginine 295, histidine 327, and serine 379.

The protein belongs to the RuBisCO large chain family. Type I subfamily. Heterohexadecamer of 8 large chains and 8 small chains; disulfide-linked. The disulfide link is formed within the large subunit homodimers. Requires Mg(2+) as cofactor. The disulfide bond which can form in the large chain dimeric partners within the hexadecamer appears to be associated with oxidative stress and protein turnover.

Its subcellular location is the plastid. It localises to the chloroplast. It carries out the reaction 2 (2R)-3-phosphoglycerate + 2 H(+) = D-ribulose 1,5-bisphosphate + CO2 + H2O. The enzyme catalyses D-ribulose 1,5-bisphosphate + O2 = 2-phosphoglycolate + (2R)-3-phosphoglycerate + 2 H(+). RuBisCO catalyzes two reactions: the carboxylation of D-ribulose 1,5-bisphosphate, the primary event in carbon dioxide fixation, as well as the oxidative fragmentation of the pentose substrate in the photorespiration process. Both reactions occur simultaneously and in competition at the same active site. The polypeptide is Ribulose bisphosphate carboxylase large chain (Anthoceros angustus (Hornwort)).